A 430-amino-acid chain; its full sequence is Adenylosuccinate synthetase (430 aa).

Residues 12–18 (GDEGKGK) and 40–42 (GHT) each bind GTP. Catalysis depends on Asp-13, which acts as the Proton acceptor. Mg(2+) contacts are provided by Asp-13 and Gly-40. Residues 13–16 (DEGK), 38–41 (NAGH), Thr-128, Arg-142, Gln-223, Thr-238, and Arg-302 each bind IMP. His-41 serves as the catalytic Proton donor. 298–304 (TTTGRPR) contributes to the substrate binding site. Residues Arg-304, 330 to 332 (LLD), and 412 to 414 (SVG) contribute to the GTP site.

This sequence belongs to the adenylosuccinate synthetase family. As to quaternary structure, homodimer. It depends on Mg(2+) as a cofactor.

The protein localises to the cytoplasm. The catalysed reaction is IMP + L-aspartate + GTP = N(6)-(1,2-dicarboxyethyl)-AMP + GDP + phosphate + 2 H(+). The protein operates within purine metabolism; AMP biosynthesis via de novo pathway; AMP from IMP: step 1/2. Functionally, plays an important role in the de novo pathway of purine nucleotide biosynthesis. Catalyzes the first committed step in the biosynthesis of AMP from IMP. In Listeria welshimeri serovar 6b (strain ATCC 35897 / DSM 20650 / CCUG 15529 / CIP 8149 / NCTC 11857 / SLCC 5334 / V8), this protein is Adenylosuccinate synthetase.